The primary structure comprises 356 residues: Histidinol-phosphate aminotransferase (356 aa).

Lysine 217 is subject to N6-(pyridoxal phosphate)lysine.

It belongs to the class-II pyridoxal-phosphate-dependent aminotransferase family. Histidinol-phosphate aminotransferase subfamily. As to quaternary structure, homodimer. The cofactor is pyridoxal 5'-phosphate.

It catalyses the reaction L-histidinol phosphate + 2-oxoglutarate = 3-(imidazol-4-yl)-2-oxopropyl phosphate + L-glutamate. The protein operates within amino-acid biosynthesis; L-histidine biosynthesis; L-histidine from 5-phospho-alpha-D-ribose 1-diphosphate: step 7/9. The polypeptide is Histidinol-phosphate aminotransferase (Chromobacterium violaceum (strain ATCC 12472 / DSM 30191 / JCM 1249 / CCUG 213 / NBRC 12614 / NCIMB 9131 / NCTC 9757 / MK)).